Consider the following 446-residue polypeptide: Citrate/sodium symporter (446 aa).

Transmembrane regions (helical) follow at residues 23–43 (IFGMPLPLYAFALITLLLSHF), 46–66 (AIPTDLVGGFALMFVMGAIFG), 79–99 (IGGAPVMIFLVAAYFVYAGIF), 110–130 (VMDKSNFLNLFIAVLITGAIL), and 148–168 (ILAGIVGASLFGIVIGLCFGI). 2 residues coordinate Na(+): Ile181 and Gly183. Positions 186 and 187 each coordinate citrate. 5 helical membrane passes run 213 to 233 (IAILTIANIFAIIFAALLDMI), 267 to 287 (ETAVGMVLSTTCFLLAYVVAK), 289 to 309 (ILPSIGGVSIHYFAWMVLIVA), 335 to 355 (QLLWVLMVGVGVCYTDLQEII), and 364 to 384 (VIAAIIVVGAVVGAAIGGWLI). The Na(+) site is built by Met399 and Asn401. Arg402, Gly404, Ser405, and Arg428 together coordinate citrate. The helical transmembrane segment at 425 to 445 (ISSRLGGGIVLVIASIVFSMM) threads the bilayer.

The protein belongs to the 2-hydroxycarboxylate transporter (2-HCT) (TC 2.A.24) family. In terms of assembly, homodimer.

Its subcellular location is the cell inner membrane. It catalyses the reaction citrate(out) + 2 Na(+)(out) = citrate(in) + 2 Na(+)(in). In terms of biological role, secondary active transporter that catalyzes the uptake of citrate across the membrane with the concomitant uptake of sodium. Is specific for citrate. This chain is Citrate/sodium symporter, found in Salmonella pullorum.